The primary structure comprises 367 residues: Avirulence protein ATR5 (367 aa).

Positions 1–16 are cleaved as a signal peptide; sequence MRLISPALVVSTAIQA. The N-linked (GlcNAc...) asparagine glycan is linked to asparagine 20. Positions 33 to 65 are disordered; that stretch reads NPLASAHPPDVGYDGVPAGRVRNPDDPTTEERT. A compositionally biased stretch (basic and acidic residues) spans 54 to 65; the sequence is RNPDDPTTEERT. The short motif at 61 to 64 is the dEER element; it reads TEER.

This sequence belongs to the RxLR effector family.

It is found in the secreted. It localises to the host cell. Its function is as follows. Secreted effector that acts as an elicitor of hypersensitive response (HR) specifically on plants carrying defense protein RPP5. This Hyaloperonospora arabidopsidis (strain Emoy2) (Downy mildew agent) protein is Avirulence protein ATR5.